The sequence spans 198 residues: GTP-binding protein Di-Ras1 (198 aa).

GTP-binding positions include 17 to 22, 33 to 39, 61 to 65, 121 to 125, Ala151, and 151 to 152; these read GVGKSS, RDTYIPT, DTTGS, NKCDE, and AK. The short motif at 36–44 is the Effector region element; the sequence is YIPTIEDTY. Cys195 carries the cysteine methyl ester modification. Cys195 carries S-geranylgeranyl cysteine lipidation. Positions 196 to 198 are cleaved as a propeptide — removed in mature form; the sequence is ALM.

Belongs to the small GTPase superfamily. Di-Ras family.

Its subcellular location is the cell membrane. Displays low GTPase activity and exists predominantly in the GTP-bound form. This Mus musculus (Mouse) protein is GTP-binding protein Di-Ras1 (Diras1).